The following is a 112-amino-acid chain: Nitrogen regulatory protein P-II (112 aa).

The residue at position 49 (Ser-49) is a Phosphoserine. O-UMP-tyrosine is present on Tyr-51.

This sequence belongs to the P(II) protein family. As to quaternary structure, homotrimer. Phosphorylation dependent on the nitrogen source and spectral light quality.

Functionally, P-II indirectly controls the transcription of the GS gene (glnA). P-II prevents NR-II-catalyzed conversion of NR-I to NR-I-phosphate, the transcriptional activator of glnA. When P-II is phosphorylated, these events are reversed. In nitrogen-limiting conditions, when the ratio of Gln to 2-ketoglutarate decreases, P-II is phosphorylated which allows the deadenylation of glutamine synthetase (GS), thus activating the enzyme. In Nostoc punctiforme (strain ATCC 29133 / PCC 73102), this protein is Nitrogen regulatory protein P-II (glnB).